The sequence spans 165 residues: Small ribosomal subunit protein eS10 (165 aa).

Y12 is modified (phosphotyrosine). A disordered region spans residues 92–165 (ATLRRSRPET…FGRGRGQPPQ (74 aa)). Residues 97-128 (SRPETGRPRPKGLEGERPARLTRGEADRDTYR) show a composition bias toward basic and acidic residues. Residues K138 and K139 each participate in a glycyl lysine isopeptide (Lys-Gly) (interchain with G-Cter in ubiquitin) cross-link. S146 bears the Phosphoserine mark. R153 carries the omega-N-methylarginine modification. A compositionally biased stretch (gly residues) spans 154–165 (GGFGRGRGQPPQ). Symmetric dimethylarginine occurs at positions 158 and 160.

The protein belongs to the eukaryotic ribosomal protein eS10 family. In terms of assembly, component of the small ribosomal subunit. The methylated form interacts with NPM1. Post-translationally, methylated by PRMT5. Methylation is necessary for its interaction with NPS1, its localization in the granular component (GC) region of the nucleolus, for the proper assembly of ribosomes, protein synthesis and optimal cell proliferation. In terms of processing, monoubiquitinated by ZNF598 when a ribosome has stalled during translation of poly(A) sequences, leading to preclude synthesis of a long poly-lysine tail and initiate the ribosome quality control (RQC) pathway to degrade the potentially detrimental aberrant nascent polypeptide. Deubiquitinated by OTUD3 and USP21, antagonizing ZNF598 activity. Deubiquitinated by OTUD1, antagonizing ZNF598 activity and stimulating formation of polysomes: deubiquitination by OTUD1 promotes stability and translation of a subset mRNAs with a high abundance of rare codons can limit the translation rate. Deubiquitinated by USP10.

The protein resides in the cytoplasm. The protein localises to the nucleus. Its subcellular location is the nucleolus. Component of the 40S ribosomal subunit. The ribosome is a large ribonucleoprotein complex responsible for the synthesis of proteins in the cell. The sequence is that of Small ribosomal subunit protein eS10 (RPS10) from Oryctolagus cuniculus (Rabbit).